A 183-amino-acid polypeptide reads, in one-letter code: Capsid protein (183 aa).

A disordered region spans residues 136–183 (NAPILSTLPETTVVRRRGRSPRRRTPSPRRRRSQSPRRRRSQSRESQC). The segment covering 149-176 (VRRRGRSPRRRTPSPRRRRSQSPRRRRS) has biased composition (basic residues). 3 positions are modified to phosphoserine; by host: Ser-155, Ser-162, and Ser-170. The 1; half-length repeat unit spans residues 155-161 (SPRRRTP). Residues 155–177 (SPRRRTPSPRRRRSQSPRRRRSQ) form a 3 X 8 AA repeats of S-P-R-R-R-[PR]-S-Q region. Positions 158 to 175 (RRTPSPRRRRSQSPRRRR) match the Bipartite nuclear localization signal motif. A run of 2 repeats spans residues 162-169 (SPRRRRSQ) and 170-177 (SPRRRRSQ). The RNA binding stretch occupies residues 177–183 (QSRESQC).

It belongs to the orthohepadnavirus core antigen family. As to quaternary structure, homodimerizes, then multimerizes. Interacts with cytosol exposed regions of viral L glycoprotein present in the reticulum-to-Golgi compartment. Interacts with human FLNB. Phosphorylated form interacts with host importin alpha; this interaction depends on the exposure of the NLS, which itself depends upon genome maturation and/or phosphorylation of the capsid protein. Interacts with host NUP153. Phosphorylated by host SRPK1, SRPK2, and maybe protein kinase C or GAPDH. Phosphorylation is critical for pregenomic RNA packaging. Protein kinase C phosphorylation is stimulated by HBx protein and may play a role in transport of the viral genome to the nucleus at the late step during the viral replication cycle.

It localises to the virion. It is found in the host cytoplasm. Self assembles to form an icosahedral capsid. Most capsids appear to be large particles with an icosahedral symmetry of T=4 and consist of 240 copies of capsid protein, though a fraction forms smaller T=3 particles consisting of 180 capsid proteins. Entering capsids are transported along microtubules to the nucleus. Phosphorylation of the capsid is thought to induce exposure of nuclear localization signal in the C-terminal portion of the capsid protein that allows binding to the nuclear pore complex via the importin (karyopherin-) alpha and beta. Capsids are imported in intact form through the nuclear pore into the nuclear basket, where it probably binds NUP153. Only capsids that contain the mature viral genome can release the viral DNA and capsid protein into the nucleoplasm. Immature capsids get stuck in the basket. Capsids encapsulate the pre-genomic RNA and the P protein. Pre-genomic RNA is reverse-transcribed into DNA while the capsid is still in the cytoplasm. The capsid can then either be directed to the nucleus, providing more genomes for transcription, or bud through the endoplasmic reticulum to provide new virions. This chain is Capsid protein, found in Hepatitis B virus genotype D subtype ayw (isolate France/Tiollais/1979) (HBV-D).